The chain runs to 500 residues: NAD(P)H-quinone oxidoreductase chain 4, chloroplastic (500 aa).

The next 14 membrane-spanning stretches (helical) occupy residues 4–24 (FPWL…MLFL), 35–55 (YTIC…CYNF), 87–107 (IGTI…AFPV), 113–130 (LFHF…GSFS), 134–154 (LLLF…LLSM), 167–187 (FILY…GISL), 211–231 (IILY…IPLH), 242–262 (HYST…YGLV), 272–292 (AHSM…IYAA), 305–325 (IAYS…SITD), 330–350 (GAIL…FLAG), 386–406 (LALP…GIIT), 416–436 (ILII…LLSM), and 466–486 (ISSL…LALA).

The protein belongs to the complex I subunit 4 family.

It is found in the plastid. It localises to the chloroplast thylakoid membrane. It carries out the reaction a plastoquinone + NADH + (n+1) H(+)(in) = a plastoquinol + NAD(+) + n H(+)(out). The catalysed reaction is a plastoquinone + NADPH + (n+1) H(+)(in) = a plastoquinol + NADP(+) + n H(+)(out). The sequence is that of NAD(P)H-quinone oxidoreductase chain 4, chloroplastic from Aethionema grandiflorum (Persian stone-cress).